The sequence spans 329 residues: Cathepsin K (329 aa).

Residues 1 to 15 (MWGLKVLLLPVVSFA) form the signal peptide. Residues 16-114 (LYPEEILDTH…TLYIPEWEGR (99 aa)) constitute a propeptide, activation peptide. N-linked (GlcNAc...) asparagine glycosylation occurs at Asn-103. Disulfide bonds link Cys-136-Cys-177, Cys-170-Cys-210, and Cys-269-Cys-318. Residue Cys-139 is part of the active site. Catalysis depends on residues His-276 and Asn-296.

Belongs to the peptidase C1 family. As to expression, predominantly expressed in osteoclasts (bones). Expressed in thyroid epithelial cells.

Its subcellular location is the lysosome. It localises to the secreted. The protein localises to the apical cell membrane. The enzyme catalyses Broad proteolytic activity. With small-molecule substrates and inhibitors, the major determinant of specificity is P2, which is preferably Leu, Met &gt; Phe, and not Arg.. Functionally, thiol protease involved in osteoclastic bone resorption and may participate partially in the disorder of bone remodeling. Displays potent endoprotease activity against fibrinogen at acid pH. May play an important role in extracellular matrix degradation. Involved in the release of thyroid hormone thyroxine (T4) by limited proteolysis of TG/thyroglobulin in the thyroid follicle lumen. This Homo sapiens (Human) protein is Cathepsin K (CTSK).